Consider the following 240-residue polypeptide: Putative outer membrane protein RT0057 (240 aa).

The first 20 residues, 1-20, serve as a signal peptide directing secretion; the sequence is MLKKLCVILFISSITINSHA.

It belongs to the OmpW/AlkL family.

The protein localises to the cell outer membrane. The chain is Putative outer membrane protein RT0057 from Rickettsia typhi (strain ATCC VR-144 / Wilmington).